A 209-amino-acid polypeptide reads, in one-letter code: Small ribosomal subunit protein uS3 (209 aa).

In terms of domain architecture, KH type-2 spans 38 to 107 (IRKVIKNKYA…RFIVNVEEIK (70 aa)).

It belongs to the universal ribosomal protein uS3 family. In terms of assembly, part of the 30S ribosomal subunit. Forms a tight complex with proteins S10 and S14.

Its function is as follows. Binds the lower part of the 30S subunit head. Binds mRNA in the 70S ribosome, positioning it for translation. This is Small ribosomal subunit protein uS3 from Thermosipho africanus (strain TCF52B).